The primary structure comprises 349 residues: ATPase GET3 (349 aa).

Residue 27–34 participates in ATP binding; the sequence is KGGVGKTT. The active site involves Asp-58. Residues Glu-240 and Asn-267 each coordinate ATP. Positions 280 and 283 each coordinate Zn(2+).

Belongs to the arsA ATPase family. In terms of assembly, homodimer. Component of the Golgi to ER traffic (GET) complex, which is composed of GET1, GET2 and GET3. Within the complex, GET1 and GET2 form a heterotetramer which is stabilized by phosphatidylinositol binding and which binds to the GET3 homodimer. Interacts with the chloride channel protein GEF1.

The protein resides in the cytoplasm. It localises to the endoplasmic reticulum. It is found in the golgi apparatus. ATPase required for the post-translational delivery of tail-anchored (TA) proteins to the endoplasmic reticulum. Recognizes and selectively binds the transmembrane domain of TA proteins in the cytosol. This complex then targets to the endoplasmic reticulum by membrane-bound receptors GET1 and GET2, where the tail-anchored protein is released for insertion. This process is regulated by ATP binding and hydrolysis. ATP binding drives the homodimer towards the closed dimer state, facilitating recognition of newly synthesized TA membrane proteins. ATP hydrolysis is required for insertion. Subsequently, the homodimer reverts towards the open dimer state, lowering its affinity for the GET1-GET2 receptor, and returning it to the cytosol to initiate a new round of targeting. Cooperates with the HDEL receptor ERD2 to mediate the ATP-dependent retrieval of resident ER proteins that contain a C-terminal H-D-E-L retention signal from the Golgi to the ER. Involved in low-level resistance to the oxyanions arsenite and arsenate, and in heat tolerance. The polypeptide is ATPase GET3 (Eremothecium gossypii (strain ATCC 10895 / CBS 109.51 / FGSC 9923 / NRRL Y-1056) (Yeast)).